Reading from the N-terminus, the 391-residue chain is Ferrochelatase (391 aa).

Fe cation is bound by residues H196 and E281.

Belongs to the ferrochelatase family.

The protein localises to the cytoplasm. The enzyme catalyses heme b + 2 H(+) = protoporphyrin IX + Fe(2+). It participates in porphyrin-containing compound metabolism; protoheme biosynthesis; protoheme from protoporphyrin-IX: step 1/1. Its function is as follows. Catalyzes the ferrous insertion into protoporphyrin IX. This Synechococcus sp. (strain CC9311) protein is Ferrochelatase.